We begin with the raw amino-acid sequence, 334 residues long: Glycerol-3-phosphate dehydrogenase [NAD(P)+] (334 aa).

NADPH-binding residues include Trp13, Arg33, and Lys106. Lys106, Gly137, and Ser139 together coordinate sn-glycerol 3-phosphate. Ala141 is an NADPH binding site. 5 residues coordinate sn-glycerol 3-phosphate: Lys192, Asp245, Ser255, Arg256, and Asn257. The active-site Proton acceptor is Lys192. Residue Arg256 participates in NADPH binding. NADPH is bound by residues Val280 and Glu282.

It belongs to the NAD-dependent glycerol-3-phosphate dehydrogenase family.

The protein resides in the cytoplasm. It carries out the reaction sn-glycerol 3-phosphate + NAD(+) = dihydroxyacetone phosphate + NADH + H(+). The enzyme catalyses sn-glycerol 3-phosphate + NADP(+) = dihydroxyacetone phosphate + NADPH + H(+). It participates in membrane lipid metabolism; glycerophospholipid metabolism. Catalyzes the reduction of the glycolytic intermediate dihydroxyacetone phosphate (DHAP) to sn-glycerol 3-phosphate (G3P), the key precursor for phospholipid synthesis. The sequence is that of Glycerol-3-phosphate dehydrogenase [NAD(P)+] from Chlamydia trachomatis serovar L2 (strain ATCC VR-902B / DSM 19102 / 434/Bu).